A 494-amino-acid polypeptide reads, in one-letter code: Aspartyl/glutamyl-tRNA(Asn/Gln) amidotransferase subunit B (494 aa).

It belongs to the GatB/GatE family. GatB subfamily. Heterotrimer of A, B and C subunits.

It catalyses the reaction L-glutamyl-tRNA(Gln) + L-glutamine + ATP + H2O = L-glutaminyl-tRNA(Gln) + L-glutamate + ADP + phosphate + H(+). The enzyme catalyses L-aspartyl-tRNA(Asn) + L-glutamine + ATP + H2O = L-asparaginyl-tRNA(Asn) + L-glutamate + ADP + phosphate + 2 H(+). In terms of biological role, allows the formation of correctly charged Asn-tRNA(Asn) or Gln-tRNA(Gln) through the transamidation of misacylated Asp-tRNA(Asn) or Glu-tRNA(Gln) in organisms which lack either or both of asparaginyl-tRNA or glutaminyl-tRNA synthetases. The reaction takes place in the presence of glutamine and ATP through an activated phospho-Asp-tRNA(Asn) or phospho-Glu-tRNA(Gln). This is Aspartyl/glutamyl-tRNA(Asn/Gln) amidotransferase subunit B from Rhodopseudomonas palustris (strain HaA2).